The primary structure comprises 472 residues: MDVGGALDLYGCSVNVYNAILIFIWVLFLWETYINLRQLKVAKRVTESPEEIKCLMNDVDFDKSRRYAIDKMNFDIVSGFYNILSLSAVLYFQLIAWAWHKSQEHMLFVCSYAPRSFGTTEGSEILFSLLFTVYVALFQFFESLPWSYYRHFVIEERYGFNKQTIGFFIKDRLKSLAVGLVIGLPIISMLVWIIKAGGHYFYIYAYGFTFVVSFIIMFIYPEFIAPIFDRYEHFPDCELRKKIEELAASIEFPLKKLYVVEGSKRSSHSNAYFYGFGKNKRIVLFDTLIKGFKMPGVEADSSANADESSDETQNRGCGDDEEILATLAHELGHWKLKHMTFNLIIAQINIFFMFFAFGQLINVDQLFVDFGFPPSTAPILIRLIVVFQFIFMPYSSVLEFLMTMLSRKFEFQADAFAVSLKSGEKLKSALLVLTKDNLSFPVYDWLYSMCNHSHPPIIERLAAIDAKMGKEK.

Over 1 to 8 (MDVGGALD) the chain is Lumenal. Residues 9–29 (LYGCSVNVYNAILIFIWVLFL) traverse the membrane as a helical segment. Over 30–75 (WETYINLRQLKVAKRVTESPEEIKCLMNDVDFDKSRRYAIDKMNFD) the chain is Cytoplasmic. A helical membrane pass occupies residues 76–96 (IVSGFYNILSLSAVLYFQLIA). Over 97 to 124 (WAWHKSQEHMLFVCSYAPRSFGTTEGSE) the chain is Lumenal. Residues 125–145 (ILFSLLFTVYVALFQFFESLP) traverse the membrane as a helical segment. Residues 146-175 (WSYYRHFVIEERYGFNKQTIGFFIKDRLKS) lie on the Cytoplasmic side of the membrane. The chain crosses the membrane as a helical span at residues 176–196 (LAVGLVIGLPIISMLVWIIKA). Over 197–207 (GGHYFYIYAYG) the chain is Lumenal. A helical membrane pass occupies residues 208 to 228 (FTFVVSFIIMFIYPEFIAPIF). Residues 229–340 (DRYEHFPDCE…LGHWKLKHMT (112 aa)) are Cytoplasmic-facing. Position 329 (His-329) interacts with Zn(2+). Glu-330 is a catalytic residue. Residue His-333 coordinates Zn(2+). The chain crosses the membrane as a helical span at residues 341–361 (FNLIIAQINIFFMFFAFGQLI). The Lumenal portion of the chain corresponds to 362–382 (NVDQLFVDFGFPPSTAPILIR). The chain crosses the membrane as a helical span at residues 383–403 (LIVVFQFIFMPYSSVLEFLMT). Over 404–472 (MLSRKFEFQA…AIDAKMGKEK (69 aa)) the chain is Cytoplasmic. Glu-410 lines the Zn(2+) pocket. Catalysis depends on Asp-414, which acts as the Proton donor.

This sequence belongs to the peptidase M48A family. In terms of assembly, homodimer; disulfide-linked. Zn(2+) serves as cofactor.

Its subcellular location is the endoplasmic reticulum membrane. It catalyses the reaction Hydrolyzes the peptide bond -P2-(S-farnesyl or geranylgeranyl)C-P1'-P2'-P3'-COOH where P1' and P2' are amino acids with aliphatic side chains and P3' is any C-terminal residue.. Inhibited by ethylenediaminetetraacetic acid (EDTA) but not by serine, aspartic or cysteine protease inhibitors. Inhibited by high concentration of Zn(2+) (&gt; 0.1 mM). Functionally, zinc-dependent metalloproteinase. Proteolytically removes the C-terminal three residues of farnesylated proteins. In Taenia solium (Pork tapeworm), this protein is CAAX prenyl protease 1 homolog.